Here is a 166-residue protein sequence, read N- to C-terminus: Large ribosomal subunit protein bL17 (166 aa).

A disordered region spans residues 122–166 (PESAPVKAKQDRSKRVRGSKKTQEGSEKAEVSASAGEAAAVTEEK). Residues 142–151 (KTQEGSEKAE) are compositionally biased toward basic and acidic residues. Residues 152–166 (VSASAGEAAAVTEEK) show a composition bias toward low complexity.

The protein belongs to the bacterial ribosomal protein bL17 family. Part of the 50S ribosomal subunit. Contacts protein L32.

In Chlorobium phaeobacteroides (strain BS1), this protein is Large ribosomal subunit protein bL17.